Here is a 160-residue protein sequence, read N- to C-terminus: Transcription antitermination protein NusB (160 aa).

Belongs to the NusB family.

In terms of biological role, involved in transcription antitermination. Required for transcription of ribosomal RNA (rRNA) genes. Binds specifically to the boxA antiterminator sequence of the ribosomal RNA (rrn) operons. The protein is Transcription antitermination protein NusB of Rhizobium etli (strain CIAT 652).